Consider the following 474-residue polypeptide: Stabilizer of axonemal microtubules 1 (474 aa).

Mn regions lie at residues 30 to 64 (KPCLLSEYTENYPCYHSYLPRESFKPRREYQKGSI), 65 to 97 (PMEGLTTSRRDFGPHKVAPVKAHQYDQFVPSEE), 98 to 131 (NMDLLTTYKKDYNPYTVCRVDPIKPRDSKYPYSN), 132 to 165 (KMEYLPTYKADYLPWNQPRRQPLRLEHKYQPASV), 166 to 199 (RFDNRTTHQDDYPIKGLVKTVSCKPLAMPKLCNI), 200 to 232 (PLEDVTNYKMSYVAHPVEKRFVHEAEKFRPCEI), 233 to 266 (PFESLTTHKQSYRGLMGEPAKSLKPLARPPGLDM), 267 to 299 (PFSNTTEFRDKYQAWPTPQMFSKAPITYVPPED), 300 to 332 (SMDLLTTVQAHYTYPKGVPARSCRPAPQIRKSG), 333 to 366 (RFEGSSTTKDDYKQWSSMRTEPVKPIPQLDFPTE), 367 to 400 (PLDCLTTTRAHYVPHPPINTKSCKPHWSGPRGNV), and 401 to 434 (PVEGQTTYTISFTPKEMSKCLASYPEPPGYTFEE). A disordered region spans residues 318–350 (PARSCRPAPQIRKSGRFEGSSTTKDDYKQWSSM). The segment at 444–474 (KPVSQAGSQQSSHLSVDDSENPSQRKLEVSA) is disordered. Residues 448 to 457 (QAGSQQSSHL) are compositionally biased toward polar residues.

It belongs to the FAM154 family. Associates with microtubules via the Mn regions.

It is found in the cytoplasm. The protein localises to the cytoskeleton. Its subcellular location is the microtubule organizing center. It localises to the centrosome. The protein resides in the centriole. It is found in the cilium basal body. The protein localises to the cilium axoneme. Its subcellular location is the flagellum axoneme. In terms of biological role, may play a role in the regulation of cilium length. Stabilizes microtubules at low temperature. This is Stabilizer of axonemal microtubules 1 (SAXO1) from Macaca fascicularis (Crab-eating macaque).